We begin with the raw amino-acid sequence, 399 residues long: Forkhead box protein A4-A (399 aa).

A DNA-binding region (fork-head) is located at residues 119–213 (KPPYSYISLI…ENGCYLRRQK (95 aa)). Over residues 219–234 (RSKSGEGEKKVNKPGE) the composition is skewed to basic and acidic residues. The interval 219 to 290 (RSKSGEGEKK…VGLSPTSEQA (72 aa)) is disordered. Residues 267 to 277 (STGSSIHQACG) are compositionally biased toward polar residues.

In terms of tissue distribution, during stages 8.5 to 10, expressed in the part of the dorsal mesoderm invaginating the dorsal blastopore lip (Spemann organizer), as a direct response to dorsal mesodermal induction. At stage 12 (mid-gastrulation), restricted to the dorsal midline in the deeper layers of mesodermal cells. Continuously present in the posterior portion of invaginated mesoderm and expressed within the notochord. Also present in the midline of the neural plate during gastrulation, but absent from the notoplate in exogastrula embryos. Expression in the notochord continues in neurula-stage embryos and at stage 20 in addition to the notochord, expression is seen in the pharyngeal endoderm.

It is found in the nucleus. Its function is as follows. Transcriptional repressor involved in embryonic nervous system development. Plays a role in the induction and patterning of the anterior-posterior neural axis. Involved in the establishment of floor plate differentiation from neural plate cells during gastrulation. Binds the anf1 promoter sequence to restrict expression of anf1 to the anterior of the neural plate, thereby patterning the forebrain. Can bind to the HNF-3-alpha DNA target sequence. Cooperates with t/bra in a dose-dependent manner to specify dorsal mesoderm formation, including notochord. Binds to DNA via the target sequence 5'-[GA]TAAA[TC]A-3', with 5'-GTAAATA-3' being the preferred binding site. This Xenopus laevis (African clawed frog) protein is Forkhead box protein A4-A (foxa4-a).